A 210-amino-acid polypeptide reads, in one-letter code: Probable nicotinate-nucleotide adenylyltransferase (210 aa).

It belongs to the NadD family.

It catalyses the reaction nicotinate beta-D-ribonucleotide + ATP + H(+) = deamido-NAD(+) + diphosphate. Its pathway is cofactor biosynthesis; NAD(+) biosynthesis; deamido-NAD(+) from nicotinate D-ribonucleotide: step 1/1. Functionally, catalyzes the reversible adenylation of nicotinate mononucleotide (NaMN) to nicotinic acid adenine dinucleotide (NaAD). This Methylococcus capsulatus (strain ATCC 33009 / NCIMB 11132 / Bath) protein is Probable nicotinate-nucleotide adenylyltransferase.